Reading from the N-terminus, the 177-residue chain is Adenine phosphoribosyltransferase (177 aa).

Belongs to the purine/pyrimidine phosphoribosyltransferase family. As to quaternary structure, homodimer.

It is found in the cytoplasm. The catalysed reaction is AMP + diphosphate = 5-phospho-alpha-D-ribose 1-diphosphate + adenine. Its pathway is purine metabolism; AMP biosynthesis via salvage pathway; AMP from adenine: step 1/1. Catalyzes a salvage reaction resulting in the formation of AMP, that is energically less costly than de novo synthesis. The protein is Adenine phosphoribosyltransferase of Chlorobium chlorochromatii (strain CaD3).